We begin with the raw amino-acid sequence, 160 residues long: Serine-protein kinase RsbW (160 aa).

The protein belongs to the anti-sigma-factor family.

The catalysed reaction is L-seryl-[protein] + ATP = O-phospho-L-seryl-[protein] + ADP + H(+). The enzyme catalyses L-threonyl-[protein] + ATP = O-phospho-L-threonyl-[protein] + ADP + H(+). In terms of biological role, negative regulator of sigma-B activity. Phosphorylates and inactivates its specific antagonist protein, RsbV. Upon phosphorylation of RsbV, RsbW is released and binds to sigma-B, thereby blocking its ability to form an RNA polymerase holoenzyme (E-sigma-B). This chain is Serine-protein kinase RsbW, found in Bacillus anthracis (strain A0248).